The primary structure comprises 68 residues: Large ribosomal subunit protein uL29 (68 aa).

A disordered region spans residues 32-68 (QDQLKRRTGSLDNPAERTQHRRDLARVLTVLTQKTKA). The segment covering 45–56 (PAERTQHRRDLA) has biased composition (basic and acidic residues).

Belongs to the universal ribosomal protein uL29 family.

The polypeptide is Large ribosomal subunit protein uL29 (Myxococcus xanthus (strain DK1622)).